A 294-amino-acid polypeptide reads, in one-letter code: Cell division protein ZipA (294 aa).

Residue methionine 1 is a topological domain, periplasmic. Residues 2–22 (EIGLREWLILIGIIVIAGILF) form a helical membrane-spanning segment. The Cytoplasmic segment spans residues 23–294 (DGWRRMRGGK…FERRALTQKR (272 aa)). 2 disordered regions span residues 64–111 (THKE…GDLN) and 126–146 (KDDF…STPV). The span at 82-91 (ARERERDPKP) shows a compositional bias: basic and acidic residues.

This sequence belongs to the ZipA family. Interacts with FtsZ via their C-terminal domains.

It is found in the cell inner membrane. Essential cell division protein that stabilizes the FtsZ protofilaments by cross-linking them and that serves as a cytoplasmic membrane anchor for the Z ring. Also required for the recruitment to the septal ring of downstream cell division proteins. In Pseudomonas entomophila (strain L48), this protein is Cell division protein ZipA.